A 387-amino-acid polypeptide reads, in one-letter code: MAEEYVDVVDIEARKKALAVFREKFKEILEQVMRGENPTIMLPKRTLSNTIYDEKRKLLLLGPEKLKRSFFDLHESKKFMQTLLMARIIYEALERNEYPTIRDLYYRGKHTIVYREPGGRRHEENTWDEQRESDAVIRDIEVFTGLLREEMLILSKEKGKVVGNMRIRSGGDIIDLSKMGHGAYAIEPTPDLIEFIDVDAEYVLVVEKDAVFQQLHRIGFWKKHRAILITSAGQPDRATRRFVRRLNEELGLPVYILTDADPYGWYIYSVFKIGSITLSYESERLATPNARFIGVSMTDIFGYKSKKPYLTEQERRNFIIKAKEADIKRAYELKNYKWFQTKKWQIEIDIFLEKKAKLEIEAMTSKGLRFLADKYLPEKIETGDWIE.

In terms of domain architecture, Topo IIA-type catalytic spans 12 to 160; sequence EARKKALAVF…MLILSKEKGK (149 aa). Y106 functions as the O-(5'-phospho-DNA)-tyrosine intermediate in the catalytic mechanism. E207 and D259 together coordinate Mg(2+).

It belongs to the TOP6A family. Homodimer. Heterotetramer of two Top6A and two Top6B chains. Mg(2+) serves as cofactor.

It catalyses the reaction ATP-dependent breakage, passage and rejoining of double-stranded DNA.. Functionally, relaxes both positive and negative superturns and exhibits a strong decatenase activity. The protein is Type 2 DNA topoisomerase 6 subunit A of Hyperthermus butylicus (strain DSM 5456 / JCM 9403 / PLM1-5).